We begin with the raw amino-acid sequence, 216 residues long: MPKFFCDYCDVYLTHDSMSVRKAHNSGRNHLRNVVDYYQQIGHEKAQSVIDSITSSYAAEGQAHANPMLPQNQPGGVPPGLGFPPPGAGVPPFPPFPGGMPPPFPGMPGGAPVPPPGAFGAPGVPGGIPPPGAPGARGMPPMPPFPGMPGAPAGIPGVPPPMPGPGGLPFPPPGGLPFPPPGAGNFPFPPPGAPGAFPGMPPFGAPGQGPPGADKR.

Residues 4 to 36 (FFCDYCDVYLTHDSMSVRKAHNSGRNHLRNVVD) form a Matrin-type zinc finger. Disordered stretches follow at residues 70–89 (PQNQ…PGAG) and 125–216 (PGGI…ADKR). 2 stretches are compositionally biased toward pro residues: residues 140 to 149 (PPMPPFPGMP) and 157 to 204 (GVPP…PPFG).

This sequence belongs to the U1 small nuclear ribonucleoprotein C family. U1 snRNP is composed of the 7 core Sm proteins B/B', D1, D2, D3, E, F and G that assemble in a heptameric protein ring on the Sm site of the small nuclear RNA to form the core snRNP, and at least 3 U1 snRNP-specific proteins U1-70K, U1-A and U1-C. U1-C interacts with U1 snRNA and the 5' splice-site region of the pre-mRNA.

It localises to the nucleus. In terms of biological role, component of the spliceosomal U1 snRNP, which is essential for recognition of the pre-mRNA 5' splice-site and the subsequent assembly of the spliceosome. U1-C is directly involved in initial 5' splice-site recognition for both constitutive and regulated alternative splicing. The interaction with the 5' splice-site seems to precede base-pairing between the pre-mRNA and the U1 snRNA. Stimulates commitment or early (E) complex formation by stabilizing the base pairing of the 5' end of the U1 snRNA and the 5' splice-site region. The chain is U1 small nuclear ribonucleoprotein C from Neurospora crassa (strain ATCC 24698 / 74-OR23-1A / CBS 708.71 / DSM 1257 / FGSC 987).